Reading from the N-terminus, the 233-residue chain is Small ribosomal subunit protein uS3 (233 aa).

One can recognise a KH type-2 domain in the interval 39 to 107 (VRQFLMKTLE…PVQINISEVR (69 aa)).

Belongs to the universal ribosomal protein uS3 family. As to quaternary structure, part of the 30S ribosomal subunit. Forms a tight complex with proteins S10 and S14.

Binds the lower part of the 30S subunit head. Binds mRNA in the 70S ribosome, positioning it for translation. This is Small ribosomal subunit protein uS3 from Buchnera aphidicola subsp. Acyrthosiphon pisum (strain APS) (Acyrthosiphon pisum symbiotic bacterium).